Reading from the N-terminus, the 342-residue chain is Homocysteine S-methyltransferase 4 (342 aa).

One can recognise a Hcy-binding domain in the interval 13–328; it reads ALRGFVREAG…ATVRAIARAV (316 aa). Zn(2+) is bound by residues C245, C313, and C314.

As to quaternary structure, monomer. It depends on Zn(2+) as a cofactor.

It catalyses the reaction S-methyl-L-methionine + L-homocysteine = 2 L-methionine + H(+). Functionally, catalyzes methyl transfer from S-methylmethionine (SMM) to adenosyl-L-homocysteine (AdoMet). SMM degradation (by HMT-1, HMT-2, HMT-3 and HMT-4) and biosynthesis (by MMT1) constitute the SMM cycle in plants, which is probably required to achieve short term control of AdoMet level. The chain is Homocysteine S-methyltransferase 4 (HMT-4) from Zea mays (Maize).